Reading from the N-terminus, the 534-residue chain is UDP-glucuronosyltransferase 2A3 (534 aa).

The signal sequence occupies residues 1–18 (MVSEKCVAAFFLLQLCWA). The Extracellular segment spans residues 19–493 (GCGFCSKVLV…SWFQYHSLDV (475 aa)). Asparagine 102 carries N-linked (GlcNAc...) asparagine glycosylation. Lysine 135 bears the N6-succinyllysine mark. The N-linked (GlcNAc...) asparagine glycan is linked to asparagine 204. Residues 494–514 (IGFLLLCVVTLTFIITKFCLF) traverse the membrane as a helical segment. At 515-534 (VCQKLYMKESKKMGNRKKKN) the chain is on the cytoplasmic side.

The protein belongs to the UDP-glycosyltransferase family. Highly expressed in liver, with lower levels in duodenum and jejunum.

The protein localises to the membrane. It catalyses the reaction glucuronate acceptor + UDP-alpha-D-glucuronate = acceptor beta-D-glucuronoside + UDP + H(+). Functionally, UDP-glucuronosyltransferases catalyze phase II biotransformation reactions in which lipophilic substrates are conjugated with glucuronic acid to increase water solubility and enhance excretion. They are of major importance in the conjugation and subsequent elimination of potentially toxic xenobiotics and endogenous compounds. The sequence is that of UDP-glucuronosyltransferase 2A3 (Ugt2a3) from Mus musculus (Mouse).